The following is a 348-amino-acid chain: MKFLDQARIYIRSGDGGAGCLSFRHEKFIEFGGPDGGDGGRGGDVVALCVEGLNTLIDYRYQQHFKAKTGTHGMGKNRAGARGADCILKVPAGTQIFDEDGETLIADLTEIGQSVCLARGGNGGFGNAHFKTSTNQAPRRANPGQEGEEMTLWLRLKLIADAGLVGLPNAGKSTFLSTVSAARPKIADYPFTTLHPQLGVVAYGDREFVLADIPGLIEGAHEGVGLGDRFLGHVERCRVLLHLVDAGCEHAGKAYKTIRKELAAYGNGLDEKPEIVALSKIDTVDAETLKNQMARLKRAAKRTPLKLSAATHTNLTETLQSLLAAIDAAGAAQEAAAEPAATSWHPCD.

An Obg domain is found at 1–159; the sequence is MKFLDQARIY…MTLWLRLKLI (159 aa). In terms of domain architecture, OBG-type G spans 160–327; it reads ADAGLVGLPN…TLQSLLAAID (168 aa). GTP contacts are provided by residues 166–173, 191–195, 212–215, 279–282, and 308–310; these read GLPNAGKS, FTTLH, DIPG, SKID, and SAA. Mg(2+) is bound by residues Ser173 and Thr193.

The protein belongs to the TRAFAC class OBG-HflX-like GTPase superfamily. OBG GTPase family. As to quaternary structure, monomer. Mg(2+) is required as a cofactor.

It is found in the cytoplasm. An essential GTPase which binds GTP, GDP and possibly (p)ppGpp with moderate affinity, with high nucleotide exchange rates and a fairly low GTP hydrolysis rate. Plays a role in control of the cell cycle, stress response, ribosome biogenesis and in those bacteria that undergo differentiation, in morphogenesis control. The polypeptide is GTPase Obg (Beijerinckia indica subsp. indica (strain ATCC 9039 / DSM 1715 / NCIMB 8712)).